The primary structure comprises 778 residues: Endonuclease MutS2 (778 aa).

An ATP-binding site is contributed by 328 to 335 (GPNTGGKT). One can recognise a Smr domain in the interval 702–777 (LDLRGKRYEE…GSGATIVTFK (76 aa)).

Belongs to the DNA mismatch repair MutS family. MutS2 subfamily. In terms of assembly, homodimer. Binds to stalled ribosomes, contacting rRNA.

Functionally, endonuclease that is involved in the suppression of homologous recombination and thus may have a key role in the control of bacterial genetic diversity. Acts as a ribosome collision sensor, splitting the ribosome into its 2 subunits. Detects stalled/collided 70S ribosomes which it binds and splits by an ATP-hydrolysis driven conformational change. Acts upstream of the ribosome quality control system (RQC), a ribosome-associated complex that mediates the extraction of incompletely synthesized nascent chains from stalled ribosomes and their subsequent degradation. Probably generates substrates for RQC. The sequence is that of Endonuclease MutS2 from Streptococcus pneumoniae (strain P1031).